A 154-amino-acid polypeptide reads, in one-letter code: Protein X (154 aa).

The interval 68–117 (PCALRFTSARRMETTVNAPWNLPTTLHKRTLGLSPRSTTWIEEYIKDCVF) is mitochondrial targeting sequence.

Belongs to the orthohepadnavirus protein X family. In terms of assembly, may form homodimer. May interact with host CEBPA, CFLAR, CREB1, DDB1, E4F1, HBXIP, HSPD1/HSP60, NFKBIA, POLR2E and SMAD4. Interacts with host SMC5-SMC6 complex and induces its degradation. Interacts with host TRPC4AP; leading to prevent ubiquitination of TRPC4AP. Interacts with host PLSCR1; this interaction promotes ubiquitination and degradation of HBx and impairs HBx-mediated cell proliferation. A fraction may be phosphorylated in insect cells and HepG2 cells, a human hepatoblastoma cell line. Phosphorylated in vitro by host protein kinase C or mitogen-activated protein kinase. N-acetylated in insect cells.

It localises to the host cytoplasm. The protein localises to the host nucleus. Its subcellular location is the host mitochondrion. Functionally, multifunctional protein that plays a role in silencing host antiviral defenses and promoting viral transcription. Does not seem to be essential for HBV infection. May be directly involved in development of cirrhosis and liver cancer (hepatocellular carcinoma). Most of cytosolic activities involve modulation of cytosolic calcium. The effect on apoptosis is controversial depending on the cell types in which the studies have been conducted. May induce apoptosis by localizing in mitochondria and causing loss of mitochondrial membrane potential. May also modulate apoptosis by binding host CFLAR, a key regulator of the death-inducing signaling complex (DISC). Promotes viral transcription by using the host E3 ubiquitin ligase DDB1 to target the SMC5-SMC6 complex to proteasomal degradation. This host complex would otherwise bind to viral episomal DNA, and prevents its transcription. Moderately stimulates transcription of many different viral and cellular transcription elements. Promoters and enhancers stimulated by HBx contain DNA binding sites for NF-kappa-B, AP-1, AP-2, c-EBP, ATF/CREB, or the calcium-activated factor NF-AT. In Homo sapiens (Human), this protein is Protein X.